Reading from the N-terminus, the 348-residue chain is Rhodopsin (348 aa).

The residue at position 1 (Met-1) is an N-acetylmethionine. Residues Met-1–Gln-36 lie on the Extracellular side of the membrane. Asn-2 and Asn-15 each carry an N-linked (GlcNAc...) asparagine glycan. Residues Phe-37–Val-61 traverse the membrane as a helical segment. Residues Thr-62–Asn-73 are Cytoplasmic-facing. A helical membrane pass occupies residues Tyr-74 to Tyr-96. At Thr-97–Cys-110 the chain is on the extracellular side. The cysteines at positions 110 and 187 are disulfide-linked. Residues Asn-111–Ile-133 traverse the membrane as a helical segment. The 'Ionic lock' involved in activated form stabilization signature appears at Glu-134–Tyr-136. Topologically, residues Glu-134–His-152 are cytoplasmic. Residues Ala-153–Val-173 traverse the membrane as a helical segment. At Gly-174–Ser-202 the chain is on the extracellular side. Glu-201 contacts Zn(2+). Residues Phe-203–Gly-224 form a helical membrane-spanning segment. Residues Gln-225–Arg-252 are Cytoplasmic-facing. The helical transmembrane segment at Met-253–Tyr-274 threads the bilayer. At Ile-275 to Ile-286 the chain is on the extracellular side. Position 279 (Gln-279) interacts with Zn(2+). Residues Phe-287 to Met-308 form a helical membrane-spanning segment. Position 296 is an N6-(retinylidene)lysine (Lys-296). The Cytoplasmic segment spans residues Met-309 to Ala-348. 2 S-palmitoyl cysteine lipidation sites follow: Cys-322 and Cys-323. Positions Asp-330 to Ala-348 are interaction with SAG. Ser-334 and Ser-338 each carry phosphoserine. Phosphothreonine occurs at positions 340 and 342. At Ser-343 the chain carries Phosphoserine.

The protein belongs to the G-protein coupled receptor 1 family. Opsin subfamily. Homodimer. Interacts (phosphorylated form) with SAG. Interacts with GNAT1. Interacts with GNAT3. SAG and G-proteins compete for a common binding site. Interacts with GRK1. Interacts with PRCD; the interaction promotes PRCD stability. Forms a complex with ASAP1 and ARF4. Forms a complex with ASAP1, RAB11A, Rabin8/RAB3IP, ARF4 and RAB11FIP3; the complex regulates Golgi-to-cilia rhodopsin/RHO transport in photoreceptors. Post-translationally, phosphorylated on some or all of the serine and threonine residues present in the C-terminal region. Contains one covalently linked retinal chromophore. Upon light absorption, the covalently bound 11-cis-retinal is converted to all-trans-retinal. After hydrolysis of the Schiff base and release of the covalently bound all-trans-retinal, active rhodopsin is regenerated by binding of a fresh molecule of 11-cis-retinal.

The protein resides in the membrane. It is found in the cell projection. The protein localises to the cilium. It localises to the photoreceptor outer segment. Functionally, photoreceptor required for image-forming vision at low light intensity. Required for photoreceptor cell viability after birth. Light-induced isomerization of 11-cis to all-trans retinal triggers a conformational change that activates signaling via G-proteins. Subsequent receptor phosphorylation mediates displacement of the bound G-protein alpha subunit by the arrestin SAG and terminates signaling. In Pagophilus groenlandicus (Harp seal), this protein is Rhodopsin (RHO).